Consider the following 342-residue polypeptide: Dihydroorotase (342 aa).

Zn(2+)-binding residues include His-13 and His-15. Substrate contacts are provided by residues 15-17 (HLR) and Asn-41. Zn(2+) is bound by residues Lys-98, His-135, and His-173. An N6-carboxylysine modification is found at Lys-98. His-135 is a substrate binding site. Leu-218 provides a ligand contact to substrate. Zn(2+) is bound at residue Asp-246. Asp-246 is a catalytic residue. 2 residues coordinate substrate: His-250 and Ala-262.

The protein belongs to the metallo-dependent hydrolases superfamily. DHOase family. Class II DHOase subfamily. As to quaternary structure, homodimer. Zn(2+) is required as a cofactor.

The enzyme catalyses (S)-dihydroorotate + H2O = N-carbamoyl-L-aspartate + H(+). It functions in the pathway pyrimidine metabolism; UMP biosynthesis via de novo pathway; (S)-dihydroorotate from bicarbonate: step 3/3. In terms of biological role, catalyzes the reversible cyclization of carbamoyl aspartate to dihydroorotate. This chain is Dihydroorotase, found in Aliivibrio fischeri (strain MJ11) (Vibrio fischeri).